A 501-amino-acid polypeptide reads, in one-letter code: Cobyric acid synthase (501 aa).

Positions 251 to 446 (NIDIAIIRLS…LHGIFDSEEF (196 aa)) constitute a GATase cobBQ-type domain. C332 serves as the catalytic Nucleophile. H438 is an active-site residue.

This sequence belongs to the CobB/CobQ family. CobQ subfamily.

Its pathway is cofactor biosynthesis; adenosylcobalamin biosynthesis. Catalyzes amidations at positions B, D, E, and G on adenosylcobyrinic A,C-diamide. NH(2) groups are provided by glutamine, and one molecule of ATP is hydrogenolyzed for each amidation. The chain is Cobyric acid synthase from Clostridium botulinum (strain Alaska E43 / Type E3).